A 542-amino-acid chain; its full sequence is Propane 2-monooxygenase, hydroxylase component large subunit (542 aa).

Residues E97, E127, H130, E192, E226, and H229 each contribute to the Fe cation site.

It belongs to the TmoA/XamoA family. In terms of assembly, the propane 2-monooxygenase multicomponent enzyme system is composed of an electron transfer component and a monooxygenase component interacting with the effector protein MimD. The electron transfer component is composed of a reductase (MimB), and the monooxygenase component is formed by a large subunit (MimA) and a small subunit (MimC). Requires the presence of the chaperonin-like protein MimG to ensure a productive folding, resulting of a soluble MimA, which leads to the active form of MimABCD. It depends on Fe(2+) as a cofactor.

It carries out the reaction propane + NADH + O2 + H(+) = propan-2-ol + NAD(+) + H2O. The catalysed reaction is acetone + NADH + O2 + H(+) = hydroxyacetone + NAD(+) + H2O. The enzyme catalyses butan-2-one + NADH + O2 + H(+) = 1-hydroxy-2-butanone + NAD(+) + H2O. It catalyses the reaction phenol + NADH + O2 + H(+) = hydroquinone + NAD(+) + H2O. Its function is as follows. Component of the propane 2-monooxygenase multicomponent enzyme system which is involved in the degradation of propane via the O2-dependent hydroxylation of propane. Also involved in the degradation of acetone via the O2-dependent hydroxylation of acetone. Also able to catalyze the oxidation of phenol, methylethylketone (2-butanone), 1-propanol and 2-propanol. The sequence is that of Propane 2-monooxygenase, hydroxylase component large subunit from Mycolicibacterium goodii (Mycobacterium goodii).